The chain runs to 347 residues: Sensor protein VraS (347 aa).

The next 2 helical transmembrane spans lie at 13-33 (ILVYSMLAAFLFIDKVFVNII) and 43-63 (IFGIPVFLFLNLIIILLCIIV). One can recognise a Histidine kinase domain in the interval 150-341 (RLARELHDSV…RIEVKAPLNK (192 aa)). His156 is subject to Phosphohistidine.

Post-translationally, autophosphorylated on His-156.

It localises to the cell membrane. It carries out the reaction ATP + protein L-histidine = ADP + protein N-phospho-L-histidine.. Its function is as follows. Member of the two-component regulatory system PprA/PprB involved in biofilm formation by controlling the expression of many related genes including type IVb pili major subunit flp pilin, adhesin bapA or cupE fimbriae. Also modulates quorum-sensing signal production acting on both negative and positive modulators. Functions as a heme sensor histidine kinase which is autophosphorylated at a histidine residue and transfers its phosphate group to PprB. The chain is Sensor protein VraS (vraS) from Staphylococcus aureus (strain COL).